The sequence spans 1214 residues: Myosin-1 (1214 aa).

Residues 1 to 21 (MAIIKRGARNKTAQEPAKRSA) form a disordered region. The Myosin motor domain occupies 36–715 (VGVSDLTLLS…TLFALEHMRD (680 aa)). 129–136 (GESGAGKT) is an ATP binding site. A Phosphoserine modification is found at Ser357. The interval 404–486 (SIGILDIYGF…PGIFAAMNDS (83 aa)) is actin-binding. 2 IQ domains span residues 719–739 (YNMAARIQRAWRRFLQRRIDS) and 740–765 (ATRIQRAIREKKGGNKYEKLRDEGSK). Residues 771 to 961 (KERRTMSLLG…TILVRRGHPA (191 aa)) form the TH1 domain. 3 disordered regions span residues 926 to 1090 (KPGK…SELP), 1129 to 1177 (HQGG…AAAQ), and 1193 to 1214 (NKMRVESDGEDNGNDDDDDDDW). The span at 965 to 980 (QKKKPKKGKGHSKHHS) shows a compositional bias: basic residues. 2 stretches are compositionally biased toward low complexity: residues 981-1000 (TSTSAPRSSVQSSQPSAPVS) and 1037-1057 (AAQPQATPQPAQVTQPQQKKV). Over residues 1058 to 1067 (APPPPPPPPM) the composition is skewed to pro residues. The SH3 domain occupies 1069–1131 (SSEPKYEAAY…PTNYVVKHQG (63 aa)). Residues 1157–1177 (VSSSQSETATTATPASVAAAQ) show a composition bias toward low complexity. Residues 1200 to 1214 (DGEDNGNDDDDDDDW) are compositionally biased toward acidic residues.

The protein belongs to the TRAFAC class myosin-kinesin ATPase superfamily. Myosin family. Phosphorylation of the TEDS site (Ser-357) is required for the polarization of the actin cytoskeleton. Phosphorylation probably activates the myosin-I ATPase activity.

It localises to the cytoplasm. The protein resides in the cytoskeleton. Its subcellular location is the actin patch. Type-I myosin implicated in the organization of the actin cytoskeleton. Required for proper actin cytoskeleton polarization. At the cell cortex, assembles in patch-like structures together with proteins from the actin-polymerizing machinery and promotes actin assembly. Functions as actin nucleation-promoting factor (NPF) for the Arp2/3 complex. This is Myosin-1 (MYO1) from Vanderwaltozyma polyspora (strain ATCC 22028 / DSM 70294 / BCRC 21397 / CBS 2163 / NBRC 10782 / NRRL Y-8283 / UCD 57-17) (Kluyveromyces polysporus).